The sequence spans 138 residues: Large ribosomal subunit protein uL16 (138 aa).

The segment covering 1-13 (MLQPARRKYRKEQ) has biased composition (basic residues). Residues 1-22 (MLQPARRKYRKEQKGRNTGVAT) form a disordered region.

This sequence belongs to the universal ribosomal protein uL16 family. In terms of assembly, part of the 50S ribosomal subunit.

In terms of biological role, binds 23S rRNA and is also seen to make contacts with the A and possibly P site tRNAs. This chain is Large ribosomal subunit protein uL16, found in Polaromonas naphthalenivorans (strain CJ2).